The sequence spans 279 residues: Reaction center protein L chain (279 aa).

3 consecutive transmembrane segments (helical) span residues 33–56 (GFFGVTTLFFSVLGTALIIWGASQ), 85–113 (GLWQIITVCAIGAFVSWALREVEICRKLG), and 116–141 (YHVPIAFSFAILAYVTLVVIRPILMG). 2 residues coordinate (7R,8Z)-bacteriochlorophyll b: His154 and His174. A helical transmembrane segment spans residues 171 to 200 (NPAHMLAITFFFTTTLAMSMHGGLILSAAN). His191 provides a ligand contact to Fe cation. Residue Phe217 participates in a ubiquinone binding. The helical transmembrane segment at 226-252 (GSLGIHRLGLFLALSAAFWSAVCIVIS) threads the bilayer. Residue His231 participates in Fe cation binding.

Belongs to the reaction center PufL/M/PsbA/D family. Reaction center is composed of four bacteriochlorophylls, two bacteriopheophytins, two ubiquinones, one iron, and three highly hydrophobic polypeptide chains (designated L, M, and H).

The protein localises to the cell inner membrane. In terms of biological role, the reaction center is a membrane-bound complex that mediates the initial photochemical event in the electron transfer process of photosynthesis. The protein is Reaction center protein L chain (pufL) of Rubrivivax gelatinosus (strain NBRC 100245 / IL144).